Consider the following 264-residue polypeptide: NAD-capped RNA hydrolase NudC (264 aa).

The Zn(2+) site is built by Cys99 and Cys102. Glu112 provides a ligand contact to substrate. Positions 117 and 120 each coordinate Zn(2+). Tyr125 serves as a coordination point for substrate. The 128-residue stretch at 126 to 253 (PVICPSIIVA…TIARKLIHAT (128 aa)) folds into the Nudix hydrolase domain. Residues Ala162, Glu178, and Glu182 each coordinate a divalent metal cation. The short motif at 163-184 (GFVEVGETFEQAVQREVFEETG) is the Nudix box element. A substrate-binding site is contributed by 196 to 203 (QPWAFPNS). Glu223 is an a divalent metal cation binding site. Ala246 provides a ligand contact to substrate.

It belongs to the Nudix hydrolase family. NudC subfamily. Homodimer. Mg(2+) serves as cofactor. It depends on Mn(2+) as a cofactor. Zn(2+) is required as a cofactor.

It carries out the reaction a 5'-end NAD(+)-phospho-ribonucleoside in mRNA + H2O = a 5'-end phospho-adenosine-phospho-ribonucleoside in mRNA + beta-nicotinamide D-ribonucleotide + 2 H(+). The enzyme catalyses NAD(+) + H2O = beta-nicotinamide D-ribonucleotide + AMP + 2 H(+). It catalyses the reaction NADH + H2O = reduced beta-nicotinamide D-ribonucleotide + AMP + 2 H(+). MRNA decapping enzyme that specifically removes the nicotinamide adenine dinucleotide (NAD) cap from a subset of mRNAs by hydrolyzing the diphosphate linkage to produce nicotinamide mononucleotide (NMN) and 5' monophosphate mRNA. The NAD-cap is present at the 5'-end of some mRNAs and stabilizes RNA against 5'-processing. Has preference for mRNAs with a 5'-end purine. Catalyzes the hydrolysis of a broad range of dinucleotide pyrophosphates. This is NAD-capped RNA hydrolase NudC from Haemophilus influenzae (strain PittGG).